The sequence spans 287 residues: Small ribosomal subunit protein uS2 (287 aa).

The segment covering 254 to 277 has biased composition (low complexity); it reads LASATASATPSATASTTALTDAPA. A disordered region spans residues 254–287; sequence LASATASATPSATASTTALTDAPAGATEPTTDAS.

It belongs to the universal ribosomal protein uS2 family.

In Mycobacterium tuberculosis (strain CDC 1551 / Oshkosh), this protein is Small ribosomal subunit protein uS2 (rpsB).